A 500-amino-acid polypeptide reads, in one-letter code: Na(+)/H(+) antiporter NhaB (500 aa).

A run of 12 helical transmembrane segments spans residues 28–50 (FLLS…VLVG), 68–88 (GGLL…ALYA), 98–118 (LLLM…LLLF), 121–141 (LLLG…LAAL), 145–165 (FLDA…FFAV), 205–225 (LLMH…VGEP), 244–264 (QVAP…VALE), 301–318 (ALLV…GLAL), 350–370 (FQEA…VAVI), 394–414 (MLFI…VATI), 449–469 (VATP…IAPL), and 477–497 (MVWM…WAVS).

Belongs to the NhaB Na(+)/H(+) (TC 2.A.34) antiporter family.

It localises to the cell inner membrane. It carries out the reaction 2 Na(+)(in) + 3 H(+)(out) = 2 Na(+)(out) + 3 H(+)(in). Its function is as follows. Na(+)/H(+) antiporter that extrudes sodium in exchange for external protons. The polypeptide is Na(+)/H(+) antiporter NhaB (Pseudomonas paraeruginosa (strain DSM 24068 / PA7) (Pseudomonas aeruginosa (strain PA7))).